A 76-amino-acid polypeptide reads, in one-letter code: Small ribosomal subunit protein bS18 (76 aa).

Belongs to the bacterial ribosomal protein bS18 family. As to quaternary structure, part of the 30S ribosomal subunit. Forms a tight heterodimer with protein bS6.

Binds as a heterodimer with protein bS6 to the central domain of the 16S rRNA, where it helps stabilize the platform of the 30S subunit. The protein is Small ribosomal subunit protein bS18 of Ectopseudomonas mendocina (strain ymp) (Pseudomonas mendocina).